The primary structure comprises 262 residues: Acyl-[acyl-carrier-protein]--UDP-N-acetylglucosamine O-acyltransferase (262 aa).

This sequence belongs to the transferase hexapeptide repeat family. LpxA subfamily. As to quaternary structure, homotrimer.

It localises to the cytoplasm. The enzyme catalyses a (3R)-hydroxyacyl-[ACP] + UDP-N-acetyl-alpha-D-glucosamine = a UDP-3-O-[(3R)-3-hydroxyacyl]-N-acetyl-alpha-D-glucosamine + holo-[ACP]. It participates in glycolipid biosynthesis; lipid IV(A) biosynthesis; lipid IV(A) from (3R)-3-hydroxytetradecanoyl-[acyl-carrier-protein] and UDP-N-acetyl-alpha-D-glucosamine: step 1/6. Functionally, involved in the biosynthesis of lipid A, a phosphorylated glycolipid that anchors the lipopolysaccharide to the outer membrane of the cell. The sequence is that of Acyl-[acyl-carrier-protein]--UDP-N-acetylglucosamine O-acyltransferase from Yersinia enterocolitica serotype O:8 / biotype 1B (strain NCTC 13174 / 8081).